We begin with the raw amino-acid sequence, 904 residues long: NADH-quinone oxidoreductase subunit G (904 aa).

The 2Fe-2S ferredoxin-type domain occupies 1 to 83; it reads MATIHVDGKA…GTWISIDDEE (83 aa). 4 residues coordinate [2Fe-2S] cluster: cysteine 34, cysteine 45, cysteine 48, and cysteine 67. One can recognise a 4Fe-4S His(Cys)3-ligated-type domain in the interval 83–122; sequence ESKAFRASVVEWLMTNHPHDCPVCEEGGHCHLQDMTVMTG. Residues histidine 99, cysteine 103, cysteine 106, cysteine 112, cysteine 151, cysteine 154, cysteine 157, cysteine 201, cysteine 228, cysteine 231, cysteine 235, and cysteine 263 each coordinate [4Fe-4S] cluster. The region spanning 221-277 is the 4Fe-4S Mo/W bis-MGD-type domain; it reads MQFAPSICHGCSSGCNISPGERYGELRRIENRFNGSVNQYFLCDRGRFGYGYVNRKD.

This sequence belongs to the complex I 75 kDa subunit family. In terms of assembly, composed of 13 different subunits. Subunits NuoCD, E, F, and G constitute the peripheral sector of the complex. [2Fe-2S] cluster serves as cofactor. The cofactor is [4Fe-4S] cluster.

The enzyme catalyses a quinone + NADH + 5 H(+)(in) = a quinol + NAD(+) + 4 H(+)(out). NDH-1 shuttles electrons from NADH, via FMN and iron-sulfur (Fe-S) centers, to quinones in the respiratory chain. The immediate electron acceptor for the enzyme in this species is believed to be ubiquinone. Couples the redox reaction to proton translocation (for every two electrons transferred, four hydrogen ions are translocated across the cytoplasmic membrane), and thus conserves the redox energy in a proton gradient. In Pseudomonas putida (strain ATCC 47054 / DSM 6125 / CFBP 8728 / NCIMB 11950 / KT2440), this protein is NADH-quinone oxidoreductase subunit G (nuoG).